Here is a 76-residue protein sequence, read N- to C-terminus: MKLTCMVIVAVLFLTAWTFVTAITSNGLENLFPNAHHEMKNPEASKLNKRCVPYEGPCNWLTQNCCDATCVVFWCL.

The first 22 residues, 1–22 (MKLTCMVIVAVLFLTAWTFVTA), serve as a signal peptide directing secretion. Residues 23 to 50 (ITSNGLENLFPNAHHEMKNPEASKLNKR) constitute a propeptide that is removed on maturation. 3 cysteine pairs are disulfide-bonded: Cys-51/Cys-66, Cys-58/Cys-70, and Cys-65/Cys-75.

It belongs to the conotoxin O1 superfamily. In terms of tissue distribution, expressed by the venom duct.

Its subcellular location is the secreted. Its function is as follows. Omega-conotoxins act at presynaptic membranes, they bind and block voltage-gated calcium channels (Cav). This is Omega-conotoxin-like TxO5 (TXO5) from Conus textile (Cloth-of-gold cone).